The primary structure comprises 1257 residues: Liprin-alpha-2 (1257 aa).

Disordered regions lie at residues 1 to 29 (MMCEVMPTINEDTPMSQRGSQSSGSDSDS), 231 to 265 (ASSEGSTESEHLEGMEPGQKVHEKRLSNGSIDSTD), and 438 to 463 (EGQLEEKNQELQRARQREKMNEEHNK). The span at 16–26 (SQRGSQSSGSD) shows a compositional bias: low complexity. 3 coiled-coil regions span residues 29 to 154 (SHFE…SLRM), 185 to 541 (KALD…SLIE), and 643 to 695 (HSDA…GLNL). Position 236 is a phosphoserine (Ser236). At Thr237 the chain carries Phosphothreonine. Basic and acidic residues predominate over residues 238–256 (ESEHLEGMEPGQKVHEKRL). Ser239 is modified (phosphoserine). Phosphoserine is present on residues Ser687 and Ser689. Low complexity-rich tracts occupy residues 709–725 (TASSLASSSPPSGHSTP) and 798–813 (SSLSVSLEPESLGLGS). Disordered stretches follow at residues 709–738 (TASSLASSSPPSGHSTPKLTPRSPAREMDR) and 790–834 (SSYH…KSSI). A phosphoserine mark is found at Ser817 and Ser820. SAM domains lie at 898–964 (WDGP…MVSL), 1020–1084 (NHEW…LKRL), and 1108–1177 (WSND…LLAL). The stretch at 1081-1107 (LKRLNYDRKELERRREASQHEIKDVLV) forms a coiled coil.

The protein belongs to the liprin family. Liprin-alpha subfamily. In terms of assembly, forms homodimers and heterodimers with liprins-alpha and liprins-beta. Interacts with the second PTPase domain of PTPRD, PTPRF and PTPRS. Interacts with KIF1A; the interaction decreases in presence of calcium. As to expression, expressed only in brain.

The protein localises to the cytoplasm. It is found in the cell surface. Its subcellular location is the cell projection. The protein resides in the dendritic spine. Alters PTPRF cellular localization and induces PTPRF clustering. May regulate the disassembly of focal adhesions. May localize receptor-like tyrosine phosphatases type 2A at specific sites on the plasma membrane, possibly regulating their interaction with the extracellular environment and their association with substrates. In neuronal cells, is a scaffolding protein in the dendritic spines which acts as immobile postsynaptic post able to recruit KIF1A-driven dense core vesicles to dendritic spines. This chain is Liprin-alpha-2 (PPFIA2), found in Homo sapiens (Human).